We begin with the raw amino-acid sequence, 121 residues long: Large ribosomal subunit protein uL18 (121 aa).

It belongs to the universal ribosomal protein uL18 family. In terms of assembly, part of the 50S ribosomal subunit; part of the 5S rRNA/L5/L18/L25 subcomplex. Contacts the 5S and 23S rRNAs.

Functionally, this is one of the proteins that bind and probably mediate the attachment of the 5S RNA into the large ribosomal subunit, where it forms part of the central protuberance. This is Large ribosomal subunit protein uL18 from Polaromonas naphthalenivorans (strain CJ2).